Reading from the N-terminus, the 293-residue chain is DNA-directed RNA polymerase III subunit rpc6 (293 aa).

It belongs to the eukaryotic RPC34/RPC39 RNA polymerase subunit family. Component of the RNA polymerase III (Pol III) complex.

Its subcellular location is the nucleus. In terms of biological role, DNA-dependent RNA polymerase catalyzes the transcription of DNA into RNA using the four ribonucleoside triphosphates as substrates. Specific peripheric component of RNA polymerase III which synthesizes small RNAs, such as 5S rRNA and tRNAs. May direct RNA Pol III binding to the TFIIIB-DNA complex. The protein is DNA-directed RNA polymerase III subunit rpc6 (polr3f) of Dictyostelium discoideum (Social amoeba).